The sequence spans 266 residues: Undecaprenyl-diphosphatase (266 aa).

Transmembrane regions (helical) follow at residues 1 to 21, 43 to 63, 81 to 101, 109 to 129, 159 to 179, 183 to 203, 219 to 239, and 246 to 266; these read MVVILAIVEGITEFLPISSTG, FLIIIQLGAIFSVVVYFWKDI, LKIIVGVLPAMVIGLLLDDII, VLIVAITLIAYGVIFIGIEVV, LAMIPGTSRSGATIIGALLLG, PLAAEFSFYLAIPTMFGATAL, YLALGSAIAFVVAYIVIKWFM, and SFASFGLYRIILGIIVIVLLY.

It belongs to the UppP family.

Its subcellular location is the cell inner membrane. The enzyme catalyses di-trans,octa-cis-undecaprenyl diphosphate + H2O = di-trans,octa-cis-undecaprenyl phosphate + phosphate + H(+). Functionally, catalyzes the dephosphorylation of undecaprenyl diphosphate (UPP). Confers resistance to bacitracin. The protein is Undecaprenyl-diphosphatase of Fusobacterium nucleatum subsp. nucleatum (strain ATCC 25586 / DSM 15643 / BCRC 10681 / CIP 101130 / JCM 8532 / KCTC 2640 / LMG 13131 / VPI 4355).